Consider the following 199-residue polypeptide: RNA-free ribonuclease P (199 aa).

Belongs to the HARP family.

The enzyme catalyses Endonucleolytic cleavage of RNA, removing 5'-extranucleotides from tRNA precursor.. RNA-free RNase P that catalyzes the removal of the 5'-leader sequence from pre-tRNA to produce the mature 5'-terminus. The polypeptide is RNA-free ribonuclease P (Thermococcus onnurineus (strain NA1)).